We begin with the raw amino-acid sequence, 209 residues long: D-aminoacyl-tRNA deacylase 1 (209 aa).

Positions Gly-139–Pro-140 match the Gly-cisPro motif, important for rejection of L-amino acids motif. Residues Thr-142–Pro-209 are disordered. Composition is skewed to basic and acidic residues over residues Gln-159 to Lys-170 and Ser-181 to Ser-194. Ser-197, Ser-204, and Ser-205 each carry phosphoserine.

The protein belongs to the DTD family. In terms of assembly, homodimer. Interacts with CDC45 and TOPBP1. Preferentially phosphorylated in cells arrested early in S phase. Phosphorylation in the C-terminus weakens the interaction with CDC45.

The protein resides in the nucleus. It localises to the cytoplasm. The catalysed reaction is glycyl-tRNA(Ala) + H2O = tRNA(Ala) + glycine + H(+). It carries out the reaction a D-aminoacyl-tRNA + H2O = a tRNA + a D-alpha-amino acid + H(+). Functionally, an aminoacyl-tRNA editing enzyme that deacylates mischarged D-aminoacyl-tRNAs. Also deacylates mischarged glycyl-tRNA(Ala), protecting cells against glycine mischarging by AlaRS. Acts via tRNA-based rather than protein-based catalysis; rejects L-amino acids rather than detecting D-amino acids in the active site. By recycling D-aminoacyl-tRNA to D-amino acids and free tRNA molecules, this enzyme counteracts the toxicity associated with the formation of D-aminoacyl-tRNA entities in vivo and helps enforce protein L-homochirality. In terms of biological role, ATPase involved in DNA replication, may facilitate loading of CDC45 onto pre-replication complexes. The chain is D-aminoacyl-tRNA deacylase 1 (Dtd1) from Mus musculus (Mouse).